The chain runs to 123 residues: UPF0738 protein BCE_1319 (123 aa).

Belongs to the UPF0738 family.

In Bacillus cereus (strain ATCC 10987 / NRS 248), this protein is UPF0738 protein BCE_1319.